The chain runs to 578 residues: Dystrotelin (578 aa).

The ZZ-type zinc finger occupies 223 to 279; that stretch reads THPARCTLCRTFPITGLRYRCLKCLNFDICQMCFLSGLHSKSHQKSHPVIEHCIQMS. Zn(2+) is bound by residues cysteine 228, cysteine 231, cysteine 243, cysteine 246, cysteine 252, cysteine 255, histidine 265, and histidine 269. The stretch at 322-351 forms a coiled coil; that stretch reads HHAQARLLKKQLNQYKDKLQAIYTSQEERI. The interval 382–475 is disordered; sequence RLQPPGPSSS…QSQTQKMPQK (94 aa). Composition is skewed to basic and acidic residues over residues 399 to 410 and 431 to 451; these read KVDHSSTEKVPK and PKLDEVDRSHRSHTNAEHALR. Residues 455 to 472 show a composition bias toward polar residues; that stretch reads SPETTLHSTRAQSQTQKM. Residues 503–537 are a coiled coil; it reads ALAAVEKKEAGNIKERKDELEEEELQELLSKLMDA.

It is found in the cell membrane. The polypeptide is Dystrotelin (DYTN) (Homo sapiens (Human)).